A 131-amino-acid chain; its full sequence is UPF0102 protein YraN (131 aa).

The protein belongs to the UPF0102 family.

This Salmonella typhimurium (strain LT2 / SGSC1412 / ATCC 700720) protein is UPF0102 protein YraN.